The chain runs to 446 residues: tRNA-2-methylthio-N(6)-dimethylallyladenosine synthase (446 aa).

The MTTase N-terminal domain occupies 2-119 (KKIYIKTFGC…LPELIAQRRE (118 aa)). The [4Fe-4S] cluster site is built by Cys11, Cys48, Cys82, Cys156, Cys160, and Cys163. Residues 142–376 (RVEGGAAFVS…RIEAQAQGVN (235 aa)) enclose the Radical SAM core domain. A TRAM domain is found at 377–440 (RSMVGSVQRV…PHSLRGEAVT (64 aa)).

It belongs to the methylthiotransferase family. MiaB subfamily. Monomer. It depends on [4Fe-4S] cluster as a cofactor.

The protein resides in the cytoplasm. The catalysed reaction is N(6)-dimethylallyladenosine(37) in tRNA + (sulfur carrier)-SH + AH2 + 2 S-adenosyl-L-methionine = 2-methylsulfanyl-N(6)-dimethylallyladenosine(37) in tRNA + (sulfur carrier)-H + 5'-deoxyadenosine + L-methionine + A + S-adenosyl-L-homocysteine + 2 H(+). In terms of biological role, catalyzes the methylthiolation of N6-(dimethylallyl)adenosine (i(6)A), leading to the formation of 2-methylthio-N6-(dimethylallyl)adenosine (ms(2)i(6)A) at position 37 in tRNAs that read codons beginning with uridine. The protein is tRNA-2-methylthio-N(6)-dimethylallyladenosine synthase of Thiobacillus denitrificans (strain ATCC 25259 / T1).